The sequence spans 160 residues: MANKKEEPGHSPLVNKKAKFNFELVSFIEAGIVLSGSEVKSLREKKGNLTDAFAKIKNGEVFLENFSITPYKNGGYVNHPEIRPRKLLLHKKEIEKLERQVKEKGLVLVATKVYFKNNLRVKVEIAVGKPKKIHDKRDDMQKKDAQQEIARALKSSNRYE.

The segment at 132–160 (KIHDKRDDMQKKDAQQEIARALKSSNRYE) is disordered. The span at 135–146 (DKRDDMQKKDAQ) shows a compositional bias: basic and acidic residues.

It belongs to the SmpB family.

Its subcellular location is the cytoplasm. In terms of biological role, required for rescue of stalled ribosomes mediated by trans-translation. Binds to transfer-messenger RNA (tmRNA), required for stable association of tmRNA with ribosomes. tmRNA and SmpB together mimic tRNA shape, replacing the anticodon stem-loop with SmpB. tmRNA is encoded by the ssrA gene; the 2 termini fold to resemble tRNA(Ala) and it encodes a 'tag peptide', a short internal open reading frame. During trans-translation Ala-aminoacylated tmRNA acts like a tRNA, entering the A-site of stalled ribosomes, displacing the stalled mRNA. The ribosome then switches to translate the ORF on the tmRNA; the nascent peptide is terminated with the 'tag peptide' encoded by the tmRNA and targeted for degradation. The ribosome is freed to recommence translation, which seems to be the essential function of trans-translation. The polypeptide is SsrA-binding protein (Leptospira borgpetersenii serovar Hardjo-bovis (strain JB197)).